We begin with the raw amino-acid sequence, 158 residues long: MALITTGSKFLRALEQEGALAVYAPLEGGYEGRYLRRLRSKGYSALTYSARGLGDPAQFLMDIHGVRPPHLGKQTIGNEAAVGRVEYVLPLVGYPLQNLPANAKGLVLWLLEGHVLSPQELSYFVTLPQAEPRLKVVIEMGGDRGFSWQPLAAVAEAA.

Belongs to the complex I NdhN subunit family. As to quaternary structure, NDH-1 can be composed of about 15 different subunits; different subcomplexes with different compositions have been identified which probably have different functions.

It is found in the cellular thylakoid membrane. The catalysed reaction is a plastoquinone + NADH + (n+1) H(+)(in) = a plastoquinol + NAD(+) + n H(+)(out). It catalyses the reaction a plastoquinone + NADPH + (n+1) H(+)(in) = a plastoquinol + NADP(+) + n H(+)(out). Its function is as follows. NDH-1 shuttles electrons from an unknown electron donor, via FMN and iron-sulfur (Fe-S) centers, to quinones in the respiratory and/or the photosynthetic chain. The immediate electron acceptor for the enzyme in this species is believed to be plastoquinone. Couples the redox reaction to proton translocation, and thus conserves the redox energy in a proton gradient. Cyanobacterial NDH-1 also plays a role in inorganic carbon-concentration. This is NAD(P)H-quinone oxidoreductase subunit N from Synechococcus elongatus (strain ATCC 33912 / PCC 7942 / FACHB-805) (Anacystis nidulans R2).